A 296-amino-acid chain; its full sequence is Prostate androgen-regulated mucin-like protein 1 homolog (296 aa).

The first 20 residues, 1-20, serve as a signal peptide directing secretion; the sequence is MVCKALITLCIFAAGLRVQG. Topologically, residues 21–244 are extracellular; it reads SPTPTLLPVS…EVENALSSGS (224 aa). 3 N-linked (GlcNAc...) asparagine glycosylation sites follow: Asn-62, Asn-96, and Asn-108. A disordered region spans residues 73 to 220; sequence LTSQLPTHPR…SPQDTEPGKV (148 aa). A compositionally biased stretch (basic and acidic residues) spans 80–96; the sequence is HPREEAVTSPPLKREVN. Residues 97–111 show a composition bias toward low complexity; sequence STDSSPTGFSSNSSG. Positions 125–145 are enriched in polar residues; the sequence is SPETSVPATGSQSPTLLFSQG. Composition is skewed to low complexity over residues 146-175 and 195-205; these read PTSA…TVNN and SHTPTSHVTEP. An N-linked (GlcNAc...) asparagine glycan is attached at Asn-168. A compositionally biased stretch (basic and acidic residues) spans 206-217; it reads VPKEKSPQDTEP. A helical transmembrane segment spans residues 245–265; that stretch reads IAAITVTVIAVVLLVFGAAAY. The Cytoplasmic segment spans residues 266–296; the sequence is LKIRHSSYGRLLDDHDYGSWGNYNNPLYDDS. Phosphoserine is present on Ser-284.

It belongs to the PARM family. Highly N-glycosylated and O-glycosylated. Expressed in prostate. Detected in other organs at low levels, these include the heart and various tissues of the urogenital tract. Not detected in mammary gland.

Its subcellular location is the cell membrane. It is found in the golgi apparatus membrane. The protein localises to the endosome membrane. May regulate TLP1 expression and telomerase activity, thus enabling certain prostatic cells to resist apoptosis. The protein is Prostate androgen-regulated mucin-like protein 1 homolog (Parm1) of Rattus norvegicus (Rat).